A 234-amino-acid chain; its full sequence is 1-(5-phosphoribosyl)-5-[(5-phosphoribosylamino)methylideneamino] imidazole-4-carboxamide isomerase (234 aa).

The Proton acceptor role is filled by Asp9. Asp131 (proton donor) is an active-site residue.

The protein belongs to the HisA/HisF family.

Its subcellular location is the cytoplasm. It carries out the reaction 1-(5-phospho-beta-D-ribosyl)-5-[(5-phospho-beta-D-ribosylamino)methylideneamino]imidazole-4-carboxamide = 5-[(5-phospho-1-deoxy-D-ribulos-1-ylimino)methylamino]-1-(5-phospho-beta-D-ribosyl)imidazole-4-carboxamide. It participates in amino-acid biosynthesis; L-histidine biosynthesis; L-histidine from 5-phospho-alpha-D-ribose 1-diphosphate: step 4/9. The sequence is that of 1-(5-phosphoribosyl)-5-[(5-phosphoribosylamino)methylideneamino] imidazole-4-carboxamide isomerase from Staphylococcus saprophyticus subsp. saprophyticus (strain ATCC 15305 / DSM 20229 / NCIMB 8711 / NCTC 7292 / S-41).